A 335-amino-acid chain; its full sequence is Mesoderm-specific transcript homolog protein (335 aa).

2 helical membrane passes run 13–33 and 63–83; these read WWVQVGLLAVPLLAAYLHIPP and VGVVGSPEIVVLLHGFPTSSY. Residues 71-310 form the AB hydrolase-1 domain; the sequence is IVVLLHGFPT…PRSTVSILDD (240 aa). The RVIALD motif lies at 98-103; sequence RVIALD. N163 carries an N-linked (GlcNAc...) asparagine glycan. Residues 266–286 form a helical membrane-spanning segment; the sequence is VGALASVTIPIHFIYGPLDPV.

This sequence belongs to the AB hydrolase superfamily. As to expression, highly expressed in hydatidiform moles, but barely expressed in dermoid cysts. Biallelic expression is detected in blood lymphocytes. Seems to imprinted in an isoform-specific manner rather than in a tissue-specific manner in lymphocytes. Isoform 1 is expressed only from the paternal allele. Isoform 2 is expressed from both the paternal allele and the maternal allele.

The protein localises to the endoplasmic reticulum membrane. This Homo sapiens (Human) protein is Mesoderm-specific transcript homolog protein (MEST).